Consider the following 468-residue polypeptide: Pituitary adenylate cyclase-activating polypeptide type I receptor (468 aa).

Positions 1–20 are cleaved as a signal peptide; sequence MAGVVHVSLAALLLLPMAPA. Residues 21–152 are Extracellular-facing; that stretch reads MHSDCIFKKE…TGDQDYYYLS (132 aa). 3 cysteine pairs are disulfide-bonded: Cys-34/Cys-63, Cys-54/Cys-118, and Cys-77/Cys-134. N-linked (GlcNAc...) asparagine glycans are attached at residues Asn-48, Asn-60, and Asn-117. An important for ADCYAP1/PACAP ligand binding and specificity region spans residues 125–139; the sequence is EPFPHYFDACGFDEY. The chain crosses the membrane as a helical span at residues 153 to 177; it reads VKALYTVGYSTSLVTLTTAMVILCR. The Cytoplasmic segment spans residues 178–187; the sequence is FRKLHCTRNF. A helical transmembrane segment spans residues 188–208; it reads IHMNLFVSFMLRAISVFIKDW. The Extracellular segment spans residues 209–223; sequence ILYAEQDSNHCFIST. Residues 224–249 form a helical membrane-spanning segment; that stretch reads VECKAVMVFFHYCVVSNYFWLFIEGL. Cys-226 and Cys-296 form a disulfide bridge. The Cytoplasmic portion of the chain corresponds to 250–267; sequence YLFTLLVETFFPERRYFY. A helical membrane pass occupies residues 268 to 290; it reads WYTIIGWGTPTVCVTVWATLRLY. The Extracellular segment spans residues 291–302; that stretch reads FDDTGCWDMNDS. N-linked (GlcNAc...) asparagine glycosylation is present at Asn-300. The chain crosses the membrane as a helical span at residues 303–329; it reads TALWWVIKGPVVGSIMVNFVLFIGIIV. The Cytoplasmic segment spans residues 330–347; the sequence is ILVQKLQSPDMGGNESSI. A helical membrane pass occupies residues 348 to 374; the sequence is YLRLARSTLLLIPLFGIHYTVFAFSPE. A glycan (N-linked (GlcNAc...) asparagine) is linked at Asn-375. The Extracellular portion of the chain corresponds to 375-379; it reads NVSKR. Residues 380-403 traverse the membrane as a helical segment; sequence ERLVFELGLGSFQGFVVAVLYCFL. Residues 404 to 468 are Cytoplasmic-facing; that stretch reads NGEVQAEIKR…SGLPADNLAT (65 aa). 2 positions are modified to phosphoserine: Ser-434 and Ser-447.

Belongs to the G-protein coupled receptor 2 family. In terms of assembly, interacts with maxadilan, a vasodilator peptide from Lutzomyia longipalpis saliva; the interaction results in ADCYAP1R1 activation. In terms of tissue distribution, most abundant in the brain, low expression in the lung, liver, thymus, spleen, pancreas and placenta.

It is found in the cell membrane. Several synthetic peptides derived from maxadilan, a vasodilator peptide from Lutzomyia longipalpis saliva, act as antagonists for ADCYAP1R1. In terms of biological role, g protein-coupled receptor activated by the neuropeptide pituitary adenylate cyclase-activating polypeptide (ADCYAP1/PACAP). Binds both PACAP27 and PACAP38 bioactive peptides. Ligand binding causes a conformation change that triggers signaling via guanine nucleotide-binding proteins (G proteins) and modulates the activity of downstream effectors. Activates cAMP-dependent pathway. May regulate the release of adrenocorticotropin, luteinizing hormone, growth hormone, prolactin, epinephrine, and catecholamine. May play a role in spermatogenesis and sperm motility. Causes smooth muscle relaxation and secretion in the gastrointestinal tract. This Homo sapiens (Human) protein is Pituitary adenylate cyclase-activating polypeptide type I receptor.